A 472-amino-acid chain; its full sequence is Carbohydrate sulfotransferase 3 (472 aa).

The Cytoplasmic portion of the chain corresponds to 1-19 (MEKGLALPQDFRDLVHSLK). A helical; Signal-anchor for type II membrane protein membrane pass occupies residues 20–38 (IRGRYVLFLAFVVIVFIFI). Over 39–472 (EKENKIISRV…LEERGTFWVT (434 aa)) the chain is Lumenal. N63, N74, and N96 each carry an N-linked (GlcNAc...) asparagine glycan. Residue 135–141 (TRTGSSF) coordinates 3'-phosphoadenylyl sulfate. A glycan (N-linked (GlcNAc...) asparagine) is linked at N250. 295–303 (RDPRAVLAS) contacts 3'-phosphoadenylyl sulfate. N-linked (GlcNAc...) asparagine glycosylation is found at N413 and N457.

This sequence belongs to the sulfotransferase 1 family. Gal/GlcNAc/GalNAc subfamily. In terms of processing, N-glycosylated. In terms of tissue distribution, widely expressed. Highly expressed in spleen, lung, eye and stomach. Constitutively expressed at low level during the mid- to late-gestation period. Expressed in the brain in a temporally controlled manner: peaks at 2 weeks after birth in the cerebellum, but at 3 weeks in the cerebrum. Localizes to stromal cells in the bone marrow, and stromal cells in the marginal zone and red pulp of the spleen, but the sense probe did not.

Its subcellular location is the golgi apparatus membrane. The enzyme catalyses chondroitin beta-D-glucuronate + n 3'-phosphoadenylyl sulfate = chondroitin 6'-sulfate + n adenosine 3',5'-bisphosphate + n H(+). The catalysed reaction is 3'-phosphoadenylyl sulfate + keratan = adenosine 3',5'-bisphosphate + keratan 6'-sulfate.. In terms of biological role, sulfotransferase that utilizes 3'-phospho-5'-adenylyl sulfate (PAPS) as sulfonate donor to catalyze the transfer of sulfate to position 6 of the N-acetylgalactosamine (GalNAc) residue of chondroitin. Chondroitin sulfate constitutes the predominant proteoglycan present in cartilage and is distributed on the surfaces of many cells and extracellular matrices. Catalyzes with a lower efficiency the sulfation of Gal residues of keratan sulfate, another glycosaminoglycan. Can also catalyze the sulfation of the Gal residues in sialyl N-acetyllactosamine (sialyl LacNAc) oligosaccharides. May play a role in the maintenance of naive T-lymphocytes in the spleen. The chain is Carbohydrate sulfotransferase 3 (Chst3) from Mus musculus (Mouse).